The sequence spans 307 residues: MNNDTSKKLGTLVSDDGPVNVYVWDMDETLILLRSLLNGTYAESFNGSKDVKRGVEIGRMWEKHILKICDDFFFYEQVEECNEPFLDSLRQYDDGKDLSRYEFKQDDFSTPTDDLNKRKLAYRHRAVAERYEKGLCPFIDSESMSGLDELYNVTDEYTDRWLSSARAFLEQCSCVEESSDGTSAIEQSSQDIHILVTSGALIPSLVKCLLFRLDTFLRHENVYSSIDVGKLQCFKWIKERFNHPKFRFCAIGDGWEECAAAQALQWPFVKIDLQPDSSHRFPGLTPKTVSYYFAAVYGNSDADSSKE.

The interval 1–15 (MNNDTSKKLGTLVSD) is necessary for optimum phosphatase activity. The Nucleophile role is filled by Asp-25. Mg(2+) is bound by residues Asp-25, Asp-27, and Asp-253. Asp-27 (proton donor) is an active-site residue.

The protein belongs to the HAD-like hydrolase superfamily. EYA family. Mg(2+) is required as a cofactor.

It catalyses the reaction O-phospho-L-tyrosyl-[protein] + H2O = L-tyrosyl-[protein] + phosphate. Inhibited by EDTA. Possesses phosphatase activity toward para-nitrophenyl phosphate (pNPP) in vitro. Possesses phosphatase activity toward several phosphotyrosine-containing peptides in vitro, with low peptide substrate specificity. The chain is Protein phosphatase EYA from Arabidopsis thaliana (Mouse-ear cress).